A 133-amino-acid polypeptide reads, in one-letter code: Small ribosomal subunit protein uS9 (133 aa).

The tract at residues 111–133 (PRRSESKKFGGPGARARKQKSYR) is disordered.

The protein belongs to the universal ribosomal protein uS9 family.

The chain is Small ribosomal subunit protein uS9 from Methanosphaera stadtmanae (strain ATCC 43021 / DSM 3091 / JCM 11832 / MCB-3).